We begin with the raw amino-acid sequence, 537 residues long: CTP synthase (537 aa).

The amidoligase domain stretch occupies residues 1-268; it reads MPFKCIFLTG…STFITEKLGL (268 aa). Serine 14 contacts CTP. Position 14 (serine 14) interacts with UTP. 15–20 is a binding site for ATP; that stretch reads SLGKGL. Residue tyrosine 55 coordinates L-glutamine. Aspartate 72 contributes to the ATP binding site. 2 residues coordinate Mg(2+): aspartate 72 and glutamate 142. Residues 149–151, 188–193, and lysine 224 contribute to the CTP site; these read DIE and KTKPTQ. UTP is bound by residues 188–193 and lysine 224; that span reads KTKPTQ. Positions 294–533 constitute a Glutamine amidotransferase type-1 domain; the sequence is RIGLVGKYVQ…IQAALLYSKN (240 aa). L-glutamine is bound at residue glycine 353. The active-site Nucleophile; for glutamine hydrolysis is the cysteine 380. L-glutamine contacts are provided by residues 381 to 384, glutamate 404, and arginine 461; that span reads LGMQ. Catalysis depends on residues histidine 506 and glutamate 508.

This sequence belongs to the CTP synthase family. Homotetramer.

It carries out the reaction UTP + L-glutamine + ATP + H2O = CTP + L-glutamate + ADP + phosphate + 2 H(+). The enzyme catalyses L-glutamine + H2O = L-glutamate + NH4(+). It catalyses the reaction UTP + NH4(+) + ATP = CTP + ADP + phosphate + 2 H(+). The protein operates within pyrimidine metabolism; CTP biosynthesis via de novo pathway; CTP from UDP: step 2/2. Allosterically activated by GTP, when glutamine is the substrate; GTP has no effect on the reaction when ammonia is the substrate. The allosteric effector GTP functions by stabilizing the protein conformation that binds the tetrahedral intermediate(s) formed during glutamine hydrolysis. Inhibited by the product CTP, via allosteric rather than competitive inhibition. In terms of biological role, catalyzes the ATP-dependent amination of UTP to CTP with either L-glutamine or ammonia as the source of nitrogen. Regulates intracellular CTP levels through interactions with the four ribonucleotide triphosphates. The chain is CTP synthase from Chlamydia caviae (strain ATCC VR-813 / DSM 19441 / 03DC25 / GPIC) (Chlamydophila caviae).